The sequence spans 1185 residues: ELMO domain-containing protein F (1185 aa).

8 disordered regions span residues 88–133 (QPSP…GNNN), 176–196 (ISTN…NTAE), 361–409 (NNNS…VENE), 566–628 (KSTD…NTKS), 642–805 (ETER…KSSG), 819–868 (LGEK…PYII), 883–989 (DLDF…TQVT), and 1044–1114 (QKQK…KPVL). Composition is skewed to low complexity over residues 94-127 (STIH…SSPI), 176-194 (ISTN…NNNT), 361-406 (NNNS…NNNV), and 587-613 (PQSQ…SSSS). Residues 275–488 (DRQNVLSFLN…KTRAVLSRIK (214 aa)) enclose the ELMO domain. Positions 648-665 (SLTGSNGITDGGDSNPNS) are enriched in polar residues. Positions 688–699 (SENGSSSSFSFE) are enriched in low complexity. Residues 721–732 (FNSLTGELTMNI) are compositionally biased toward polar residues. Low complexity-rich tracts occupy residues 733–760 (SSSS…PNVS) and 767–780 (TTTT…TTTT). Polar residues predominate over residues 781–790 (DDQSQQQVPP). Residues 829-841 (KVKSKKEKKKKSK) show a composition bias toward basic residues. Composition is skewed to low complexity over residues 853–864 (NNSANNSSYNNS), 912–974 (SSSN…QQPQ), 1053–1072 (DENQ…SSNE), and 1096–1109 (GRNS…SSLS).

The polypeptide is ELMO domain-containing protein F (elmoF) (Dictyostelium discoideum (Social amoeba)).